Consider the following 754-residue polypeptide: 5-methyltetrahydropteroyltriglutamate--homocysteine methyltransferase (754 aa).

Residues 17-20 (RELK) and Lys117 each bind 5-methyltetrahydropteroyltri-L-glutamate. Residues 431 to 433 (IGS) and Glu484 contribute to the L-homocysteine site. Residues 431–433 (IGS) and Glu484 contribute to the L-methionine site. Residues 515–516 (RC) and Trp561 contribute to the 5-methyltetrahydropteroyltri-L-glutamate site. Residue Asp599 coordinates L-homocysteine. Asp599 contacts L-methionine. 5-methyltetrahydropteroyltri-L-glutamate is bound at residue Glu605. Residues His641, Cys643, and Glu665 each coordinate Zn(2+). His694 acts as the Proton donor in catalysis. Position 726 (Cys726) interacts with Zn(2+).

The protein belongs to the vitamin-B12 independent methionine synthase family. The cofactor is Zn(2+).

The catalysed reaction is 5-methyltetrahydropteroyltri-L-glutamate + L-homocysteine = tetrahydropteroyltri-L-glutamate + L-methionine. It functions in the pathway amino-acid biosynthesis; L-methionine biosynthesis via de novo pathway; L-methionine from L-homocysteine (MetE route): step 1/1. In terms of biological role, catalyzes the transfer of a methyl group from 5-methyltetrahydrofolate to homocysteine resulting in methionine formation. This is 5-methyltetrahydropteroyltriglutamate--homocysteine methyltransferase from Salmonella paratyphi B (strain ATCC BAA-1250 / SPB7).